A 260-amino-acid chain; its full sequence is HTH-type transcriptional repressor NanR (260 aa).

Residues 1–21 (MSAFDHSSDDTQETIGNSLRR) are disordered. The region spanning 27–95 (KKLSEMVEEE…NGERARVSRP (69 aa)) is the HTH gntR-type domain. The segment at residues 55 to 74 (ERELMAFFNVGRPSVREALA) is a DNA-binding region (H-T-H motif).

Belongs to the NanR family.

In terms of biological role, transcriptional repressor that controls expression of the genes required for the catabolism of sialic acids. The protein is HTH-type transcriptional repressor NanR of Klebsiella aerogenes (strain ATCC 13048 / DSM 30053 / CCUG 1429 / JCM 1235 / KCTC 2190 / NBRC 13534 / NCIMB 10102 / NCTC 10006 / CDC 819-56) (Enterobacter aerogenes).